The sequence spans 308 residues: CMP-N-acetylneuraminate:beta-galactoside alpha-2,3-sialyltransferase (308 aa).

Asp201 acts as the Proton acceptor in catalysis. CMP-N-acetyl-beta-neuraminate contacts are provided by residues 221–225 (LPHPR), 242–243 (FE), and 262–263 (SS). The Proton donor role is filled by His223.

This sequence belongs to the glycosyltransferase 52 family. Divalent metal cations are not required for the alpha-2,3-sialyltransferase activity. serves as cofactor.

In terms of biological role, catalyzes the transfer of sialic acid from the substrate CMP-N-acetylneuraminate to lactosyl lipids as preferred acceptor substrates in vitro, forming alpha-2,3-linked sialosides. Beta-1,4-linked galactosyl lipids are better substrates than beta-1,3-linked galactosyl lipids. The natural acceptor substrate may be cell surface oligosaccharides in lipooligosaccharide (LOS), whose sialylation has been demonstrated vital for the virulence of P.multocida. The sequence is that of CMP-N-acetylneuraminate:beta-galactoside alpha-2,3-sialyltransferase (lst) from Pasteurella multocida (strain Pm70).